The following is a 426-amino-acid chain: Cell adhesion molecule CEACAM16 (426 aa).

A signal peptide spans 1–22 (MKMPLTWYSWFLLSAWILNTGA). The N-linked (GlcNAc...) asparagine glycan is linked to N38. A disordered region spans residues 77-96 (ETPGPAHTGREAVRPDGSLD). A compositionally biased stretch (basic and acidic residues) spans 84–95 (TGREAVRPDGSL). Ig-like C2-type domains follow at residues 134–219 (PPTV…LNLT) and 224–310 (PERV…ASVV). C155 and C202 are oxidised to a cystine. N217 is a glycosylation site (N-linked (GlcNAc...) asparagine). A disulfide bridge links C253 with C294.

This sequence belongs to the immunoglobulin superfamily. CEA family. Homooligomer; can for homodimers and homotetramers. Interacts with TECTA and TECTB. Expressed in cochlear outer hair cells (OHC).

It localises to the secreted. In terms of biological role, required for proper hearing, plays a role in maintaining the integrity of the tectorial membrane. The polypeptide is Cell adhesion molecule CEACAM16 (Mus musculus (Mouse)).